A 308-amino-acid chain; its full sequence is Protoheme IX farnesyltransferase (308 aa).

A run of 8 helical transmembrane segments spans residues 20-40 (LLAYLALTKPRVIELLLVTAI), 50-70 (AIHPLLMLNTLVGGMMAAAGA), 102-122 (NALALGLTLTVISFFWLWCAT), 124-144 (LLAGVLALVTVAFYVFVYTLW), 149-169 (TSQNVVWGGAAGCMPVMIGWS), 170-190 (AITGTIAWPALAMFAIIFFWT), 227-249 (LIYTWLTVAATLVLALATSWLYG), and 288-308 (YLAVVFCALAVDSVIALPTLH).

This sequence belongs to the UbiA prenyltransferase family. Protoheme IX farnesyltransferase subfamily.

It localises to the cell membrane. The catalysed reaction is heme b + (2E,6E)-farnesyl diphosphate + H2O = Fe(II)-heme o + diphosphate. The protein operates within porphyrin-containing compound metabolism; heme O biosynthesis; heme O from protoheme: step 1/1. Its function is as follows. Converts heme B (protoheme IX) to heme O by substitution of the vinyl group on carbon 2 of heme B porphyrin ring with a hydroxyethyl farnesyl side group. This Mycobacterium tuberculosis (strain ATCC 25618 / H37Rv) protein is Protoheme IX farnesyltransferase.